The primary structure comprises 886 residues: Alanine--tRNA ligase (886 aa).

Zn(2+)-binding residues include His564, His568, Cys666, and His670.

This sequence belongs to the class-II aminoacyl-tRNA synthetase family. Requires Zn(2+) as cofactor.

It localises to the cytoplasm. It carries out the reaction tRNA(Ala) + L-alanine + ATP = L-alanyl-tRNA(Ala) + AMP + diphosphate. Catalyzes the attachment of alanine to tRNA(Ala) in a two-step reaction: alanine is first activated by ATP to form Ala-AMP and then transferred to the acceptor end of tRNA(Ala). Also edits incorrectly charged Ser-tRNA(Ala) and Gly-tRNA(Ala) via its editing domain. In Prochlorococcus marinus (strain MIT 9312), this protein is Alanine--tRNA ligase.